A 689-amino-acid chain; its full sequence is MQNIEKINEEEAKKLLIELADKIAQYNHAYYIEDKPLVSDAEYDQLFNTNLKLEQKFPHLILENSPSKKIGAKVENKFAKVTHQVPMLSLSNVFDEEDVKDFLDRIKSFLRLDQFSPIFCEPKIDGLSFAATYKNGILTTGATRGDGYIGEDITANIKTIKDFPHKINNAPELLEVRGEIYIEKNDFTSLNQEQEQQGKDKFANPRNAAAGSLRQLDPSVTAKRPLKYFVYAIGSAKEELANSQDQLLAKFKELGFNVNEIGKLANSEEEIFSFYEYLKTNRKNLPYEIDGVVYKLNDFALQDRMGFIARSPRFATAHKFPAIIGQTKLLSITVQVGRTGTLTPVAELEPIEIGGVIVSRATLHNYQEIARKDVRVGDYVFLQRAGDVIPQITGVDLAKRSADATTFDPPLFCPSCNSKLHYVPEDIIIRCDNGLNCPAQNYERIRHFVSKNAMDIEGLGRKQVEFLIDKGLISNPYDIFFLKEKNEASLTKLENMDGWGKKSVENLFNNIEKSKNVSLPRFIYALGIRHIGEQNAKLLTREFGSYENFIAQMELLKENDPEIYQKLNNLDGIGDKMLVDIIDFFDVKENIELIKNLSEVLNIEDYKETREQSSLTGKIVVFTGSMPTLSRAEAKATAEKLGAKVAASVSSNTDLVIAGEDAGSKLKKAKELGIKIIDEAEWLTLVRDI.

NAD(+) contacts are provided by residues 40 to 44 (DAEYD), 89 to 90 (SL), and E121. The N6-AMP-lysine intermediate role is filled by K123. 4 residues coordinate NAD(+): R144, E179, K295, and K319. Zn(2+)-binding residues include C413, C416, C431, and C437. In terms of domain architecture, BRCT spans 610–689 (REQSSLTGKI…AEWLTLVRDI (80 aa)).

The protein belongs to the NAD-dependent DNA ligase family. LigA subfamily. Requires Mg(2+) as cofactor. It depends on Mn(2+) as a cofactor.

The enzyme catalyses NAD(+) + (deoxyribonucleotide)n-3'-hydroxyl + 5'-phospho-(deoxyribonucleotide)m = (deoxyribonucleotide)n+m + AMP + beta-nicotinamide D-nucleotide.. In terms of biological role, DNA ligase that catalyzes the formation of phosphodiester linkages between 5'-phosphoryl and 3'-hydroxyl groups in double-stranded DNA using NAD as a coenzyme and as the energy source for the reaction. It is essential for DNA replication and repair of damaged DNA. The sequence is that of DNA ligase from Rickettsia bellii (strain RML369-C).